A 175-amino-acid polypeptide reads, in one-letter code: NADH-quinone oxidoreductase subunit I (175 aa).

4Fe-4S ferredoxin-type domains follow at residues 44–74 (LNRYADGLEKCIGCELCAWACPADAIFVEGA) and 90–119 (RVYQINYLRCIGCGLCIEACPTRALTMTND). Cys54, Cys57, Cys60, Cys64, Cys99, Cys102, Cys105, and Cys109 together coordinate [4Fe-4S] cluster. Residues 148-175 (PPHAMAPGATDEDYYRGTVSPSAEADAR) are disordered.

It belongs to the complex I 23 kDa subunit family. As to quaternary structure, NDH-1 is composed of 14 different subunits. Subunits NuoA, H, J, K, L, M, N constitute the membrane sector of the complex. The cofactor is [4Fe-4S] cluster.

Its subcellular location is the cell membrane. The enzyme catalyses a quinone + NADH + 5 H(+)(in) = a quinol + NAD(+) + 4 H(+)(out). NDH-1 shuttles electrons from NADH, via FMN and iron-sulfur (Fe-S) centers, to quinones in the respiratory chain. The immediate electron acceptor for the enzyme in this species is believed to be menaquinone. Couples the redox reaction to proton translocation (for every two electrons transferred, four hydrogen ions are translocated across the cytoplasmic membrane), and thus conserves the redox energy in a proton gradient. The sequence is that of NADH-quinone oxidoreductase subunit I from Mycolicibacterium gilvum (strain PYR-GCK) (Mycobacterium gilvum (strain PYR-GCK)).